The sequence spans 121 residues: Cell division protein FtsB (121 aa).

Residues 1-6 (MRNWRW) are Cytoplasmic-facing. A helical membrane pass occupies residues 7 to 24 (LLLVLAVLLAWLQYRFWF). At 25–121 (GPGNSGEVMM…PEPVDPVDHP (97 aa)) the chain is on the periplasmic side. The stretch at 31 to 66 (EVMMLEAQVAHQTQDNEGLRQRNQALAAEVKDLKDG) forms a coiled coil. The segment at 98 to 121 (APASAEASAPAQQAPEPVDPVDHP) is disordered. Residues 99-113 (PASAEASAPAQQAPE) are compositionally biased toward low complexity.

It belongs to the FtsB family. As to quaternary structure, part of a complex composed of FtsB, FtsL and FtsQ.

It localises to the cell inner membrane. In terms of biological role, essential cell division protein. May link together the upstream cell division proteins, which are predominantly cytoplasmic, with the downstream cell division proteins, which are predominantly periplasmic. This is Cell division protein FtsB from Xanthomonas axonopodis pv. citri (strain 306).